A 613-amino-acid chain; its full sequence is Carotenoid dioxygenase (613 aa).

Residues 1-25 (MSPHEVIGTVPKNSTTFRTQADEHD) are disordered. Fe(2+)-binding residues include histidine 261, histidine 313, histidine 383, and histidine 595.

This sequence belongs to the carotenoid oxygenase family. Fe(2+) serves as cofactor.

The protein localises to the cytoplasm. The protein resides in the cytosol. The catalysed reaction is torulene + O2 = 4'-apo-beta-carotenal + 3-methyl-2-butenal. It participates in carotenoid biosynthesis. Its function is as follows. Torulene dioxygenase; part of pathway that mediates the biosynthesis of neurosporaxanthin, a carboxylic apocarotenoid acting as an essential protective pigments and leading to orange pigmentation. Cao-2 mediates the cleavage of torulene into beta-apo-4'-carotenal, the aldehyde corresponding to the acidic neurosporaxanthin. Is not able to use gamma-carotene (that it is not desaturated at the C4'-C5' bond) as substrate, which suggests a high specificity of cao-2 in cleaving the C4'-C5' double bond. Neurosporaxanthin is synthesized from geranyl-geranyl pyrophosphate (GGPP) through several enzymatic activities. Phytoene synthase activity performed by the bifunctional enzyme al-2 first produces phytoene from geranyl-geranyl pyrophosphate (GGPP). The phytoene dehydrogenase al-1 then introduces 5 desaturations to lead to 3,4-didehydrolycopene via the intermediates phytofluene, zeta-carotene, neurosporene and lycopene. Al-2 cyclase activity then converts 3,4-didehydrolycopene into torulene. Al-2 can also convet lycopene into gamma-carotene which in turn is converted to beta-carotene by an additional al-2 cyclization reaction. Torulene is the substrate of the dioxidase cao-2 that breaks the molecule, removing five carbon atoms to yield beta-apo-4'-carotenal, whereas the aldehyde dehydrogenase ylo-1 mediates the last step by converting beta-apo-4'-carotenal into neurosporaxanthin. The chain is Carotenoid dioxygenase from Neurospora crassa (strain ATCC 24698 / 74-OR23-1A / CBS 708.71 / DSM 1257 / FGSC 987).